A 477-amino-acid chain; its full sequence is uncharacterized protein (477 aa).

Positions Met1–Ser18 are cleaved as a signal peptide. The Extracellular segment spans residues His19–Lys427. 3 N-linked (GlcNAc...) asparagine glycosylation sites follow: Asn40, Asn51, and Asn77. Disordered regions lie at residues Thr79–Asp103, Gly239–Pro366, and Lys378–Val398. The segment covering Thr85 to Thr97 has biased composition (low complexity). Composition is skewed to polar residues over residues Pro253–His288 and Pro298–Lys309. N-linked (GlcNAc...) asparagine glycosylation occurs at Asn300. Low complexity-rich tracts occupy residues Ser310–Thr326, Thr348–Gln361, and Lys378–Ser393. Residues Met428–Phe448 traverse the membrane as a helical segment. Topologically, residues Ala449–Met477 are cytoplasmic.

The protein localises to the cell membrane. It is found in the golgi apparatus. It localises to the trans-Golgi network membrane. This is an uncharacterized protein from Rattus norvegicus (Rat).